Consider the following 474-residue polypeptide: Probable aspartate--tRNA ligase, cytoplasmic (474 aa).

An L-aspartate-binding site is contributed by Glu203. Residues 225–228 (QLYK) form an aspartate region. Arg247 is an L-aspartate binding site. ATP contacts are provided by residues 247 to 249 (RAE), 255 to 257 (RYL), and Glu397. Ser400 and Arg404 together coordinate L-aspartate. 445 to 448 (GLER) provides a ligand contact to ATP.

The protein belongs to the class-II aminoacyl-tRNA synthetase family. Type 2 subfamily. Homodimer.

Its subcellular location is the cytoplasm. The enzyme catalyses tRNA(Asp) + L-aspartate + ATP = L-aspartyl-tRNA(Asp) + AMP + diphosphate. The chain is Probable aspartate--tRNA ligase, cytoplasmic from Enterocytozoon bieneusi (strain H348) (Microsporidian parasite).